A 450-amino-acid chain; its full sequence is Mitochondrial distribution and morphology protein 10 (450 aa).

The protein belongs to the MDM10 family. As to quaternary structure, component of the ER-mitochondria encounter structure (ERMES) or MDM complex, composed of MMM1, MDM10, MDM12 and MDM34. Associates with the mitochondrial outer membrane sorting assembly machinery SAM(core) complex.

Its subcellular location is the mitochondrion outer membrane. In terms of biological role, component of the ERMES/MDM complex, which serves as a molecular tether to connect the endoplasmic reticulum and mitochondria. Components of this complex are involved in the control of mitochondrial shape and protein biogenesis and may function in phospholipid exchange. MDM10 is involved in the late assembly steps of the general translocase of the mitochondrial outer membrane (TOM complex). Functions in the TOM40-specific route of the assembly of outer membrane beta-barrel proteins, including the association of TOM40 with the receptor TOM22 and small TOM proteins. Can associate with the SAM(core) complex as well as the MDM12-MMM1 complex, both involved in late steps of the major beta-barrel assembly pathway, that is responsible for biogenesis of all outer membrane beta-barrel proteins. May act as a switch that shuttles between both complexes and channels precursor proteins into the TOM40-specific pathway. Plays a role in mitochondrial morphology and in the inheritance of mitochondria. This is Mitochondrial distribution and morphology protein 10 from Paracoccidioides lutzii (strain ATCC MYA-826 / Pb01) (Paracoccidioides brasiliensis).